A 95-amino-acid polypeptide reads, in one-letter code: Suppressor of silencing 2b (95 aa).

The homotetramerization stretch occupies residues 8–18 (LHEIIRKLERM). A coiled-coil region spans residues 8-40 (LHEIIRKLERMNQKKQAQRKRHKLNRKERGHKS). Positions 16-49 (ERMNQKKQAQRKRHKLNRKERGHKSPSEQRRSEL) are disordered. Basic residues predominate over residues 23–37 (QAQRKRHKLNRKERG). The Nuclear localization signal signature appears at 26 to 30 (RKRHK). Basic and acidic residues predominate over residues 38-49 (HKSPSEQRRSEL).

Belongs to the cucumovirus/ilarvirus protein 2b family. As to quaternary structure, homodimer. Homotetramer (dimer of dimers).

It localises to the host nucleus. In terms of biological role, acts as a suppressor of RNA-mediated gene silencing, also known as post-transcriptional gene silencing (PTGS), a mechanism of plant viral defense that limits the accumulation of viral RNAs. Forms a homodimer to measure siRNA duplex in a length-preference mode. Binds to both siRNA duplexes (19bp) and long siRNA duplexes (30bp). This chain is Suppressor of silencing 2b, found in Canna (Florist's daisy).